The chain runs to 321 residues: UDP-N-acetylenolpyruvoylglucosamine reductase (321 aa).

One can recognise an FAD-binding PCMH-type domain in the interval 39-205 (RTGGLAELFY…TAALLEGEPG (167 aa)). Arg185 is a catalytic residue. Ser234 functions as the Proton donor in the catalytic mechanism. The active site involves Glu304.

Belongs to the MurB family. Requires FAD as cofactor.

It localises to the cytoplasm. It catalyses the reaction UDP-N-acetyl-alpha-D-muramate + NADP(+) = UDP-N-acetyl-3-O-(1-carboxyvinyl)-alpha-D-glucosamine + NADPH + H(+). The protein operates within cell wall biogenesis; peptidoglycan biosynthesis. Cell wall formation. This is UDP-N-acetylenolpyruvoylglucosamine reductase from Bartonella quintana (strain Toulouse) (Rochalimaea quintana).